A 540-amino-acid chain; its full sequence is 2-isopropylmalate synthase (540 aa).

The Pyruvate carboxyltransferase domain occupies 8–273 (VLIFDTTLRD…FFGRDEDSPT (266 aa)). 4 residues coordinate Mn(2+): Asp-17, His-208, His-210, and Asn-244. The segment at 408–540 (QLKLVQVSCG…MAQLDSSPVH (133 aa)) is regulatory domain.

Belongs to the alpha-IPM synthase/homocitrate synthase family. LeuA type 1 subfamily. As to quaternary structure, homodimer. Mn(2+) serves as cofactor.

It is found in the cytoplasm. The enzyme catalyses 3-methyl-2-oxobutanoate + acetyl-CoA + H2O = (2S)-2-isopropylmalate + CoA + H(+). It functions in the pathway amino-acid biosynthesis; L-leucine biosynthesis; L-leucine from 3-methyl-2-oxobutanoate: step 1/4. Functionally, catalyzes the condensation of the acetyl group of acetyl-CoA with 3-methyl-2-oxobutanoate (2-ketoisovalerate) to form 3-carboxy-3-hydroxy-4-methylpentanoate (2-isopropylmalate). This Synechococcus sp. (strain CC9311) protein is 2-isopropylmalate synthase.